Reading from the N-terminus, the 368-residue chain is Alanine racemase (368 aa).

Lysine 40 functions as the Proton acceptor; specific for D-alanine in the catalytic mechanism. Lysine 40 bears the N6-(pyridoxal phosphate)lysine mark. Position 134 (arginine 134) interacts with substrate. The Proton acceptor; specific for L-alanine role is filled by tyrosine 263. Substrate is bound at residue methionine 310.

Belongs to the alanine racemase family. Pyridoxal 5'-phosphate is required as a cofactor.

The catalysed reaction is L-alanine = D-alanine. It functions in the pathway amino-acid biosynthesis; D-alanine biosynthesis; D-alanine from L-alanine: step 1/1. Functionally, catalyzes the interconversion of L-alanine and D-alanine. May also act on other amino acids. The protein is Alanine racemase (alr) of Listeria monocytogenes serovar 1/2a (strain ATCC BAA-679 / EGD-e).